The chain runs to 479 residues: Ribulose bisphosphate carboxylase large chain (479 aa).

Positions 1-2 are excised as a propeptide; sequence MS. N123 and T173 together coordinate substrate. Catalysis depends on K175, which acts as the Proton acceptor. A substrate-binding site is contributed by K177. Residues K201, D203, and E204 each coordinate Mg(2+). Residue K201 is modified to N6-carboxylysine. S208 carries the post-translational modification Phosphoserine. Residue H294 is the Proton acceptor of the active site. Substrate is bound by residues R295 and H327. Position 330 is a phosphothreonine (T330). Residue S379 participates in substrate binding.

It belongs to the RuBisCO large chain family. Type I subfamily. As to quaternary structure, heterohexadecamer of 8 large chains and 8 small chains; disulfide-linked. The disulfide link is formed within the large subunit homodimers. Requires Mg(2+) as cofactor. The disulfide bond which can form in the large chain dimeric partners within the hexadecamer appears to be associated with oxidative stress and protein turnover.

It is found in the plastid. Its subcellular location is the chloroplast. It catalyses the reaction 2 (2R)-3-phosphoglycerate + 2 H(+) = D-ribulose 1,5-bisphosphate + CO2 + H2O. The catalysed reaction is D-ribulose 1,5-bisphosphate + O2 = 2-phosphoglycolate + (2R)-3-phosphoglycerate + 2 H(+). In terms of biological role, ruBisCO catalyzes two reactions: the carboxylation of D-ribulose 1,5-bisphosphate, the primary event in carbon dioxide fixation, as well as the oxidative fragmentation of the pentose substrate in the photorespiration process. Both reactions occur simultaneously and in competition at the same active site. The sequence is that of Ribulose bisphosphate carboxylase large chain from Olimarabidopsis pumila (Dwarf rocket).